Reading from the N-terminus, the 417-residue chain is Bifunctional thiamine biosynthesis protein ThiDN (417 aa).

The segment at 1–235 (MVILAIGGYD…KSKFGYNSNP (235 aa)) is hydroxymethylpyrimidine/phosphomethylpyrimidine kinase. Position 41 (Gln-41) interacts with 4-amino-5-hydroxymethyl-2-methylpyrimidine. A thiamine-phosphate synthase region spans residues 236 to 417 (TYINKEKVIK…VIQKIYNTLM (182 aa)).

It in the N-terminal section; belongs to the ThiD family. The protein in the C-terminal section; belongs to the ThiN family.

The enzyme catalyses 4-amino-5-hydroxymethyl-2-methylpyrimidine + ATP = 4-amino-2-methyl-5-(phosphooxymethyl)pyrimidine + ADP + H(+). It catalyses the reaction 4-amino-2-methyl-5-(phosphooxymethyl)pyrimidine + ATP = 4-amino-2-methyl-5-(diphosphooxymethyl)pyrimidine + ADP. It carries out the reaction 2-[(2R,5Z)-2-carboxy-4-methylthiazol-5(2H)-ylidene]ethyl phosphate + 4-amino-2-methyl-5-(diphosphooxymethyl)pyrimidine + 2 H(+) = thiamine phosphate + CO2 + diphosphate. The catalysed reaction is 2-(2-carboxy-4-methylthiazol-5-yl)ethyl phosphate + 4-amino-2-methyl-5-(diphosphooxymethyl)pyrimidine + 2 H(+) = thiamine phosphate + CO2 + diphosphate. The enzyme catalyses 4-methyl-5-(2-phosphooxyethyl)-thiazole + 4-amino-2-methyl-5-(diphosphooxymethyl)pyrimidine + H(+) = thiamine phosphate + diphosphate. It participates in cofactor biosynthesis; thiamine diphosphate biosynthesis; 4-amino-2-methyl-5-diphosphomethylpyrimidine from 5-amino-1-(5-phospho-D-ribosyl)imidazole. The protein operates within cofactor biosynthesis; thiamine diphosphate biosynthesis; thiamine phosphate from 4-amino-2-methyl-5-diphosphomethylpyrimidine and 4-methyl-5-(2-phosphoethyl)-thiazole: step 1/1. Functionally, catalyzes the phosphorylation of hydroxymethylpyrimidine phosphate (HMP-P) to HMP-PP, and of HMP to HMP-P. Its function is as follows. Condenses 4-methyl-5-(beta-hydroxyethyl)thiazole monophosphate (THZ-P) and 4-amino-5-hydroxymethyl pyrimidine pyrophosphate (HMP-PP) to form thiamine monophosphate (TMP). The protein is Bifunctional thiamine biosynthesis protein ThiDN (thiDN) of Methanocaldococcus jannaschii (strain ATCC 43067 / DSM 2661 / JAL-1 / JCM 10045 / NBRC 100440) (Methanococcus jannaschii).